Reading from the N-terminus, the 255-residue chain is Small ribosomal subunit protein uS2 (255 aa).

The protein belongs to the universal ribosomal protein uS2 family.

The sequence is that of Small ribosomal subunit protein uS2 from Streptococcus pyogenes serotype M3 (strain ATCC BAA-595 / MGAS315).